A 962-amino-acid polypeptide reads, in one-letter code: Translation initiation factor IF-2 (962 aa).

A disordered region spans residues 101-366 (AAQTQAAPVR…KKGKKLKLEP (266 aa)). Residues 117-141 (DAAKARAEAATRAEARAKAEAEAAK) show a composition bias toward basic and acidic residues. Residues 145–157 (AKAGNKAKPAAQK) show a composition bias toward low complexity. The span at 173–216 (KPAEESKAEKAQADKMPSKKPAEPKEKAAKPKHERNGKGKDAKK) shows a compositional bias: basic and acidic residues. The span at 219 to 234 (KPAAPAVPQPVVSAEE) shows a compositional bias: low complexity. Residues 235 to 269 (QAQRDEEARRAAALRAHQEALLKEKQERQARREAM) are compositionally biased toward basic and acidic residues. Positions 270–283 (KQQAEQQAKAAQEA) are enriched in low complexity. A compositionally biased stretch (basic and acidic residues) spans 338 to 354 (GGRDRNNARNGDDERVR). In terms of domain architecture, tr-type G spans 462–631 (PRPPVVTVMG…LLEAEVLELT (170 aa)). The segment at 471–478 (GHVDHGKT) is G1. 471-478 (GHVDHGKT) is a GTP binding site. Positions 496 to 500 (GITQH) are G2. The interval 517–520 (DTPG) is G3. GTP is bound by residues 517 to 521 (DTPGH) and 571 to 574 (NKID). Residues 571-574 (NKID) are G4. The tract at residues 607 to 609 (SAK) is G5.

This sequence belongs to the TRAFAC class translation factor GTPase superfamily. Classic translation factor GTPase family. IF-2 subfamily.

The protein localises to the cytoplasm. In terms of biological role, one of the essential components for the initiation of protein synthesis. Protects formylmethionyl-tRNA from spontaneous hydrolysis and promotes its binding to the 30S ribosomal subunits. Also involved in the hydrolysis of GTP during the formation of the 70S ribosomal complex. This chain is Translation initiation factor IF-2, found in Neisseria meningitidis serogroup A / serotype 4A (strain DSM 15465 / Z2491).